The chain runs to 945 residues: Isoleucine--tRNA ligase (945 aa).

A 'HIGH' region motif is present at residues 66-76 (PYANGDIHLGH). Glu581 contacts L-isoleucyl-5'-AMP. The 'KMSKS' region motif lies at 622 to 626 (KMSKS). Residue Lys625 coordinates ATP. Residues Cys908, Cys911, Cys928, and Cys931 each contribute to the Zn(2+) site.

Belongs to the class-I aminoacyl-tRNA synthetase family. IleS type 1 subfamily. Monomer. The cofactor is Zn(2+).

It localises to the cytoplasm. It carries out the reaction tRNA(Ile) + L-isoleucine + ATP = L-isoleucyl-tRNA(Ile) + AMP + diphosphate. In terms of biological role, catalyzes the attachment of isoleucine to tRNA(Ile). As IleRS can inadvertently accommodate and process structurally similar amino acids such as valine, to avoid such errors it has two additional distinct tRNA(Ile)-dependent editing activities. One activity is designated as 'pretransfer' editing and involves the hydrolysis of activated Val-AMP. The other activity is designated 'posttransfer' editing and involves deacylation of mischarged Val-tRNA(Ile). This is Isoleucine--tRNA ligase from Burkholderia lata (strain ATCC 17760 / DSM 23089 / LMG 22485 / NCIMB 9086 / R18194 / 383).